Consider the following 62-residue polypeptide: Conotoxin Qc5.2 (62 aa).

The first 22 residues, 1 to 22 (MRCVPVFIILLLLSPSAPSVDA), serve as a signal peptide directing secretion. A propeptide spanning residues 23–48 (HPMTKDDVPQASLHDDAKRTLQVPWM) is cleaved from the precursor. V60 bears the Valine amide mark.

This sequence belongs to the conotoxin T superfamily. Contains 2 disulfide bonds that can be either 'C1-C3, C2-C4' or 'C1-C4, C2-C3', since these disulfide connectivities have been observed for conotoxins with cysteine framework V (for examples, see AC P0DQQ7 and AC P81755). In terms of tissue distribution, expressed by the venom duct.

The protein localises to the secreted. This Conus quercinus (Oak cone) protein is Conotoxin Qc5.2.